A 106-amino-acid chain; its full sequence is Large ribosomal subunit protein uL24 (106 aa).

It belongs to the universal ribosomal protein uL24 family. In terms of assembly, part of the 50S ribosomal subunit.

Functionally, one of two assembly initiator proteins, it binds directly to the 5'-end of the 23S rRNA, where it nucleates assembly of the 50S subunit. Its function is as follows. One of the proteins that surrounds the polypeptide exit tunnel on the outside of the subunit. The protein is Large ribosomal subunit protein uL24 of Bordetella avium (strain 197N).